Here is a 418-residue protein sequence, read N- to C-terminus: MSDFDALLANYTSKETPKVHGVICKCVDRHGICPTPHLAKRDLRLTLLGNEIYSKVAGYDSVLPGASPLREDVVLKVASATKLITSIALLQCIDKGLIDLDEPVTKVLPEFDQKQILTDVSGSDLVLEPSKTPITARHLLTHTSGLGYPFTHRLLRLRAEVRNRAGVSPSLRVTERYEMPLVFEPGTGWLYGCSLDWAGVIVSRLHGGISLEQYFVENIWQRLGLSEPFPCFNIARHPEYNARVMGGAIQTPEGRLQPKDHWAFDNPEDQDGGSGLSCTTKDYVAVLADLVSDSPKLLKPATIAEMFTPQLEAKSPGVQMLLGLRPAWDTVSGPIAENAINHGLGGVLCMDDVPEIDQPKGMLGWGGASNIVWWVNRELRVAGFFATQQAPFGNPSVTRLVNAWKKDFWAQFKTIDHA.

Serine 79 serves as the catalytic Acyl-ester intermediate. Positions 176 and 191 each coordinate substrate.

It belongs to the class-A beta-lactamase family.

It functions in the pathway secondary metabolite biosynthesis. Functionally, acyltransferase; part of the gene cluster that mediates the biosynthesis of calbistrin A and related compounds. Calbistrin A is a secondary metabolite with an interesting structure that was recently found to have bioactivity against leukemia cells. It consists of two polyketides linked by an ester bond: a bicyclic decalin containing polyketide and a linear 12 carbon dioic acid structure. The polyketide synthase calA is probably responsible for forming the decalin moiety. Because calA lacks a designated enoylreductase (ER) domain, the required activity is provided by the trans-enoyl reductase calK. Following release from the PKS, calF then probably catalyzes the oxidation and the subsequent Diels Alder cycloisomerization that lead to the formation of the decalin moiety. The decalin polyketide backbone includes two C-methyl groups, at C7 and C11 in backbone, of which the C7 position is probably methylated by the methyltransferase domain of calA. A candidate for adding the methyl group at C11, if not done by CalA, is the cluster methyltransferase calH. Several additional tailoring enzymes within the cluster could be involved in the modification of the decalin polyketide product. Those include the 3 cytochrome P450 monooxygenases CalE, CalG and CalL, of which one might be responsible for the introduction of the extra hydroxyl group attached to the backbone of the decalin moiety, at position C9 in the backbone, that allows for attachment of the linear moiety. One tailoring enzyme activity that is expected to be involved in biosynthesis of calbistrin is an acyltransferase for connecting the two polyketide synthase products, and which could be performed by the cluster acyltransferase calJ. The enzyme responsible for the biosynthesis of the linear moiety, probably a second PKS, has not been identified yet. This Penicillium decumbens protein is Acyltransferase calJ.